Reading from the N-terminus, the 383-residue chain is Polyketide synthase 4 (383 aa).

Cys-164 serves as the catalytic Nucleophile and monoketide coumarate intermediate.

Belongs to the thiolase-like superfamily. Chalcone/stilbene synthases family. In terms of assembly, homodimer. Expressed in fruits.

The enzyme catalyses 4-coumaroyl-CoA + malonyl-CoA + H2O + H(+) = 4-hydroxybenzalacetone + 2 CO2 + 2 CoA. It carries out the reaction (E)-4-coumaroyl-CoA + 3 malonyl-CoA + 3 H(+) = 2',4,4',6'-tetrahydroxychalcone + 3 CO2 + 4 CoA. It participates in secondary metabolite biosynthesis; flavonoid biosynthesis. Inhibited by glutathione. Bifunctional polyketide synthase producing both 4-hydroxybenzalacetone and naringenin chalcone. Can use p-coumaryl-CoA and ferulyl-CoA as substrates. Catalyzes the initial key reaction step in the biosynthesis of phenylbutanoids. The protein is Polyketide synthase 4 (PKS4) of Rubus idaeus (Raspberry).